A 1053-amino-acid polypeptide reads, in one-letter code: Zinc finger and BTB domain-containing protein 11 (1053 aa).

Over residues 141 to 156 the composition is skewed to acidic residues; sequence LDLESGEESNESEDDL. Residues 141–173 are disordered; sequence LDLESGEESNESEDDLSNFTSSPTTASKPAKKK. The segment covering 157–168 has biased composition (low complexity); sequence SNFTSSPTTASK. A BTB domain is found at 214–282; it reads CDVTLLIEGE…AYTSVLSFDF (69 aa). The interval 546-566 is disordered; sequence LVQRGKKMKQPKRDAKENTEE. The segment covering 556–566 has biased composition (basic and acidic residues); it reads PKRDAKENTEE. C2H2-type zinc fingers lie at residues 569–591 and 597–619; these read HKCG…KLKH and YKCP…LIRH. The tract at residues 619-643 is disordered; that stretch reads HTRKDAPSSSSSNSTSNEASGTSSE. A compositionally biased stretch (low complexity) spans 626–642; sequence SSSSSNSTSNEASGTSS. 10 C2H2-type zinc fingers span residues 651–673, 679–701, 707–729, 735–757, 766–788, 794–816, 822–846, 858–880, 886–908, and 914–937; these read FICS…MLKH, HACQ…QSLH, FQCE…MSIH, YLCS…FKKH, YHCT…MNKH, FQCQ…VKSH, YRCN…KATH, RVCE…MNNH, FECL…VRTH, and YVCP…TKFH. Residue lysine 1043 forms a Glycyl lysine isopeptide (Lys-Gly) (interchain with G-Cter in SUMO2) linkage. At serine 1050 the chain carries Phosphoserine.

It localises to the nucleus. The protein resides in the nucleolus. Its function is as follows. May be involved in transcriptional regulation. This Homo sapiens (Human) protein is Zinc finger and BTB domain-containing protein 11.